The chain runs to 361 residues: sn-glycerol-3-phosphate import ATP-binding protein UgpC (361 aa).

The region spanning 4–235 (LSLKGVRKSY…PATVFVAGFI (232 aa)) is the ABC transporter domain. Residue 37–44 (GPSGCGKS) participates in ATP binding.

Belongs to the ABC transporter superfamily. sn-glycerol-3-phosphate importer (TC 3.A.1.1.3) family. As to quaternary structure, the complex is composed of two ATP-binding proteins (UgpC), two transmembrane proteins (UgpA and UgpE) and a solute-binding protein (UgpB).

The protein localises to the cell inner membrane. The enzyme catalyses sn-glycerol 3-phosphate(out) + ATP + H2O = sn-glycerol 3-phosphate(in) + ADP + phosphate + H(+). In terms of biological role, part of the ABC transporter complex UgpBAEC involved in sn-glycerol-3-phosphate (G3P) import. Responsible for energy coupling to the transport system. In Burkholderia cenocepacia (strain HI2424), this protein is sn-glycerol-3-phosphate import ATP-binding protein UgpC.